The primary structure comprises 529 residues: tRNA-2-methylthio-N(6)-dimethylallyladenosine synthase (529 aa).

Positions 18–134 (RTYQVRTYGC…LPTLLERARH (117 aa)) constitute an MTTase N-terminal domain. Cys27, Cys63, Cys97, Cys171, Cys175, and Cys178 together coordinate [4Fe-4S] cluster. Residues 157–404 (RESAYAGWVS…IELQERISLE (248 aa)) form the Radical SAM core domain. Positions 407–486 (QAQVGRTLEL…PHHLIADGAL (80 aa)) constitute a TRAM domain.

The protein belongs to the methylthiotransferase family. MiaB subfamily. Monomer. [4Fe-4S] cluster serves as cofactor.

The protein localises to the cytoplasm. The catalysed reaction is N(6)-dimethylallyladenosine(37) in tRNA + (sulfur carrier)-SH + AH2 + 2 S-adenosyl-L-methionine = 2-methylsulfanyl-N(6)-dimethylallyladenosine(37) in tRNA + (sulfur carrier)-H + 5'-deoxyadenosine + L-methionine + A + S-adenosyl-L-homocysteine + 2 H(+). Its function is as follows. Catalyzes the methylthiolation of N6-(dimethylallyl)adenosine (i(6)A), leading to the formation of 2-methylthio-N6-(dimethylallyl)adenosine (ms(2)i(6)A) at position 37 in tRNAs that read codons beginning with uridine. This is tRNA-2-methylthio-N(6)-dimethylallyladenosine synthase from Mycobacterium sp. (strain KMS).